The primary structure comprises 2499 residues: MIEGNIEKNNDNQVAIVGLGLRLPGNSGSPSEFWKNLLGGFDGIVDSNERWSDTFHSMGEISNKNAGLIDLEENWHSFEPLFFGINPTDAKQIDPQIKLMLKLTWEAFEDASIDPLKLRGTNTSVFVGAANTDYSFINFEQNEAPINVFNGTLSAFANRISYCFDLRGTSLTLDTACSSSLNAVHLGYESIVNGKSNYSVVAGCNILLNPYITRSFHSINITGKSGRCNSFDESADGFVRSEGVVVLILKRLSLAIQDGDQIYCVMKGSSSNVDGTFKKTNFFAPSKNAQSTNIKNAFLSSNGAMKYQDIDFFELHSTGTQVGDPIEVEAVADIFKNVKQEPLLIGSVKSNIGHLEPASGVASLAKVCLMFKHRQFVKNIHFNNPNPNIKFKEWNVKVCTETTAFPDRQVSMAINSFGITGSNACVLLSEYIKPSELKNQTSMKLNEKSKLLIPISTNSKKSLEQFKSKLLEEIDTYSESLTFEEFAMFQVYSKTTKLSQRSVLIGNDWNDLKIDINEIISTKNNKSGNIIKSNDINPPLVFSFCGQGPQYSKMGLNLYENEPIYKQSMDILDSILFKYFGYSIIQKLRSINDDPILINEPILAQPSIFMIQISLYKLYLHWGITPSIIVGHSLGEVASAFCSGMIDLETACFVIYKRATIQNKTNGSGRLLAISLNLEEFNNQFSKEYPEIEISCFNSPSSIVVCGNELDILNISKSLKDKQIFNSLLGTSSAFHSSKQDIIKDEIIESTNHIQSRPPSITTFSTVTSNKFDKNTPYNSSYIFDNLRKPVLFQQTIENIFKHIESNDLGNSVIFLELSPHPTLNHYVKEMIPKNSNYFLNKDSISVLSSLNKKKEDINEIQSTISQLYCFGYNVDFSAQFKSEITSNSFKKCSYLIPHYQWDESLFWREGISSLNNRKNGAPINQLGNKNESSPHISYTSYIDIKEEPFRFLKDHQFRGKSLFPGVGYLDIILKLFPNQDLTIPLLEFKSQFVLTEGVKKTLTTNLYKSAKNEYRATFNFKDQTSGKWIQSANSRILMKSLDVTVKKVDVQSIRDQCNWSTLKREQLYDLIKNYANISLLEPFQRIEEASYGDNRCLCKVSLDPTSSYDNESFLNICIIDTCIHPCIFFDNPASSVFERIEHLKIYSSSVPLTAEDRVKQQYVYCYAELIKQFSDFIYFKTTCFLKDGTVLLHSPLVTIASTLSTKSETDLECPNNQLFSQCLQPKDSILQSPLILKEHFNQQLQLQQSNIISISTLSTYLFSILKKRLNNLTVDEFQNNSLEQLIEKYSYVLDEVEVGTIRSNLILLTINFLLTHHKHIDQNQVSNFLLNNIPNELLVVDTIVSNKGISHIGIYQHQLILDIISKSIIPIVNEKIVFRILEIGCGVGELTKLINDNLESILNDNPSYNIDIEFVFSDYTDSKVLLIKERLFNSKKSCFFKIIDLNKQLQEQSFSPSYYDLIILSNTTNQIKDIKTSISFINEILTPNGHLLILDTNFIQTSIDEDYYLENYKQWLSFNYLNSGSGAMKLNQWNQLLINDLKFNNFICSTGEIEPYLIQVQKPNLSNSINSVSKEHTSEYDQIIIFGTCDEINIGSSFCGSGGVVPIAINSIDKFKEHAKLQPLTDKSLILFIESVNLLTVDNFNQVSMNYIEINQHLLKNEISGCKHILISRNINFETSNLFGSSLIGSFRYFCEFNQLNIYSFEFEGNNILSGGDKLFNIIQELSNSNKHSQNEFSIRSDGKIYYERIKLESNLKLKYKSKSYIENKNELVSRLKPDLTFALEAVLPLNPNFVEVKVMASGVNFKDFLVYRQLINMANSNENGDPSKPQFGYELSGIVTKVGKNVTKFKVGDHVMGVTFHTFSSSVHVDQDRIELKPSNISWFEASISLVYLTSYCSLFELGRLGLHGSTETVLIHSGSGGIGLSCIDLLQVYGFKGFLFVTVGSEEKKQFLKDRYGNFITEIYSTKNTDYEYLIKEKLIELKAPSQEYGGFSMICVDLIINTLSADYMDANFNCLSQGGRIIDLSITHMTTTDTTDFYKFKNHIGYMTYESVIAGFRKHKHVLKIIVDLLASGKLKTIPFNVYPVTKIKEAIESLGDRKHIGKNIVNFNDPEGIDLIDCPEFSNNHNFIHRSSNYKIHQDTLGQTILITGQAGLSDTIIKWIREKRSDSIESIIVLSKSPIKFELERAIGRIRSTNLKIYFKQVDISDEKLLLKTINQLFEENKDIKPIESIFHNAFSPAECEPLEIDMNHLISSHSAKSMGAYNLHKLSLNWPIKQFVLSSSVTSILGSQRQCGYVASNCFIDALSRHRKSLNLPCISINWGLLGGGGFAARNDAVFKLFELQGLVGISKDLVWGSLDLLLQNQNESTNKMVASFEFHATCKTYKNHKLSYKLDYFLNPIISKESVTDEKEFSIRQDIVDKFASLLSTDQSKLNLDIKVIDYGADSLLVVEVKNWADNKFTRNILSMPEIQNSTINQIINIVTTKVSNLPSKKK.

A Ketosynthase family 3 (KS3) domain is found at 11–430; it reads DNQVAIVGLG…GSNACVLLSE (420 aa). Catalysis depends on for beta-ketoacyl synthase activity residues C177, H316, and H354. An acyl/malonyl transferases region spans residues 623–656; that stretch reads GITPSIIVGHSLGEVASAFCSGMIDLETACFVIY. The active-site For acyl/malonyl transferase activity is the S633. Residues 922–1044 are N-terminal hotdog fold; it reads APINQLGNKN…SRILMKSLDV (123 aa). Positions 922–1209 constitute a PKS/mFAS DH domain; sequence APINQLGNKN…IASTLSTKSE (288 aa). Residue H956 is the Proton acceptor; for dehydratase activity of the active site. Residues 1059–1209 form a C-terminal hotdog fold region; the sequence is NWSTLKREQL…IASTLSTKSE (151 aa). D1121 functions as the Proton donor; for dehydratase activity in the catalytic mechanism. The Carrier domain maps to 2414-2491; that stretch reads EKEFSIRQDI…QIINIVTTKV (78 aa). S2451 carries the post-translational modification O-(pantetheine 4'-phosphoryl)serine.

It depends on pantetheine 4'-phosphate as a cofactor.

Its function is as follows. Probable polyketide synthase. This is Probable polyketide synthase 22 (pks22) from Dictyostelium discoideum (Social amoeba).